A 154-amino-acid polypeptide reads, in one-letter code: Protein X (154 aa).

The segment at 68 to 117 is mitochondrial targeting sequence; the sequence is PCALRFTSARCMATTVNAHQILPKVLHKRTLGLPAMSTTDLEAYFKDCLF.

Belongs to the orthohepadnavirus protein X family. As to quaternary structure, may form homodimer. May interact with host CEBPA, CFLAR, CREB1, DDB1, E4F1, HBXIP, HSPD1/HSP60, NFKBIA, POLR2E and SMAD4. Interacts with host SMC5-SMC6 complex and induces its degradation. Interacts with host TRPC4AP; leading to prevent ubiquitination of TRPC4AP. Interacts with host PLSCR1; this interaction promotes ubiquitination and degradation of HBx and impairs HBx-mediated cell proliferation. In terms of processing, a fraction may be phosphorylated in insect cells and HepG2 cells, a human hepatoblastoma cell line. Phosphorylated in vitro by host protein kinase C or mitogen-activated protein kinase. N-acetylated in insect cells.

The protein localises to the host cytoplasm. It localises to the host nucleus. It is found in the host mitochondrion. In terms of biological role, multifunctional protein that plays a role in silencing host antiviral defenses and promoting viral transcription. Does not seem to be essential for HBV infection. May be directly involved in development of cirrhosis and liver cancer (hepatocellular carcinoma). Most of cytosolic activities involve modulation of cytosolic calcium. The effect on apoptosis is controversial depending on the cell types in which the studies have been conducted. May induce apoptosis by localizing in mitochondria and causing loss of mitochondrial membrane potential. May also modulate apoptosis by binding host CFLAR, a key regulator of the death-inducing signaling complex (DISC). Promotes viral transcription by using the host E3 ubiquitin ligase DDB1 to target the SMC5-SMC6 complex to proteasomal degradation. This host complex would otherwise bind to viral episomal DNA, and prevents its transcription. Moderately stimulates transcription of many different viral and cellular transcription elements. Promoters and enhancers stimulated by HBx contain DNA binding sites for NF-kappa-B, AP-1, AP-2, c-EBP, ATF/CREB, or the calcium-activated factor NF-AT. The polypeptide is Protein X (Hepatitis B virus genotype A3 (isolate Cameroon/CMR983/1994) (HBV-A)).